A 212-amino-acid chain; its full sequence is Thylakoid membrane protein slr1949 (212 aa).

A helical membrane pass occupies residues 109-131 (WVQDGLLLLLALGLCGISGYRLW). A coiled-coil region spans residues 180 to 212 (PNRRQRKQYETRLQALRQSAAKMKAKTQKAKAL).

The protein localises to the cellular thylakoid membrane. The chain is Thylakoid membrane protein slr1949 from Synechocystis sp. (strain ATCC 27184 / PCC 6803 / Kazusa).